We begin with the raw amino-acid sequence, 542 residues long: MEVREISLAATTPLATDYINGTFPIEKGFSYSLQAEDVFWRRLDDIKGRAYPRRELVEYLRSYHQRFHASSETFYNIEKLLHPESVVVVGGQQAGLLTGPLYTIYKIISVIKLAKEQERKLGVPVVPLFWIAGEDHDIAEVNHVYIAEDGKIKKYVYPDIPQEKRMVSDVPLDHQVCSTWITNIVKTYGETETTNKLLDFLFQCLDQSKTFVDFFASIVLRLFASEGLVVLNAADVPLRAIESSFFTALIECHREVTDAVLRKQHQLRQLGYKNTLDIQPHCANLFYYDGRQRWLLEHDPQKEVFHSKKGEFVFSKDELIQLAKTKPGHLSNNVVTRPLMQEFLLPTLAFVAGPGEIAYWAELKEAFSIFGFKMPPVIPRVNITIVERSIQTDLAEIGIDIMDVFKGRLEEAKQQWLAQQTRYPLEEMFAKAKAEIEEIHRPLREFGMEIDRGLAGLLTKNATLLQAQIDFLHQTLQRALIRKYEVELRKFSRVEMSLMPNQAPQERIWNIFYYINKYGFDFLEKLLQLDYKWNGMHKIVYI.

Residues 458–479 (LTKNATLLQAQIDFLHQTLQRA) adopt a coiled-coil conformation.

Belongs to the BshC family.

Functionally, involved in bacillithiol (BSH) biosynthesis. May catalyze the last step of the pathway, the addition of cysteine to glucosamine malate (GlcN-Mal) to generate BSH. In Geobacillus sp. (strain WCH70), this protein is Putative cysteine ligase BshC.